The following is a 416-amino-acid chain: Serine hydroxymethyltransferase (416 aa).

(6S)-5,6,7,8-tetrahydrofolate is bound by residues Leu-121 and 125–127; that span reads GHL. Lys-229 is modified (N6-(pyridoxal phosphate)lysine).

Belongs to the SHMT family. In terms of assembly, homodimer. Pyridoxal 5'-phosphate serves as cofactor.

The protein resides in the cytoplasm. It carries out the reaction (6R)-5,10-methylene-5,6,7,8-tetrahydrofolate + glycine + H2O = (6S)-5,6,7,8-tetrahydrofolate + L-serine. It participates in one-carbon metabolism; tetrahydrofolate interconversion. Its pathway is amino-acid biosynthesis; glycine biosynthesis; glycine from L-serine: step 1/1. Functionally, catalyzes the reversible interconversion of serine and glycine with tetrahydrofolate (THF) serving as the one-carbon carrier. This reaction serves as the major source of one-carbon groups required for the biosynthesis of purines, thymidylate, methionine, and other important biomolecules. Also exhibits THF-independent aldolase activity toward beta-hydroxyamino acids, producing glycine and aldehydes, via a retro-aldol mechanism. The chain is Serine hydroxymethyltransferase from Neisseria meningitidis serogroup C / serotype 2a (strain ATCC 700532 / DSM 15464 / FAM18).